The sequence spans 482 residues: tRNA sulfurtransferase (482 aa).

The THUMP domain occupies 61–165 (DVTLAVLTQT…NDKLNLIIAR (105 aa)). ATP is bound by residues 183 to 184 (LI), Lys-265, Gly-287, and Gln-296. Cys-344 and Cys-456 are oxidised to a cystine. Positions 404–482 (LGSDVVVLDI…GYKNVKVYRP (79 aa)) constitute a Rhodanese domain. Cys-456 (cysteine persulfide intermediate) is an active-site residue.

This sequence belongs to the ThiI family.

The protein localises to the cytoplasm. The catalysed reaction is [ThiI sulfur-carrier protein]-S-sulfanyl-L-cysteine + a uridine in tRNA + 2 reduced [2Fe-2S]-[ferredoxin] + ATP + H(+) = [ThiI sulfur-carrier protein]-L-cysteine + a 4-thiouridine in tRNA + 2 oxidized [2Fe-2S]-[ferredoxin] + AMP + diphosphate. It carries out the reaction [ThiS sulfur-carrier protein]-C-terminal Gly-Gly-AMP + S-sulfanyl-L-cysteinyl-[cysteine desulfurase] + AH2 = [ThiS sulfur-carrier protein]-C-terminal-Gly-aminoethanethioate + L-cysteinyl-[cysteine desulfurase] + A + AMP + 2 H(+). Its pathway is cofactor biosynthesis; thiamine diphosphate biosynthesis. Functionally, catalyzes the ATP-dependent transfer of a sulfur to tRNA to produce 4-thiouridine in position 8 of tRNAs, which functions as a near-UV photosensor. Also catalyzes the transfer of sulfur to the sulfur carrier protein ThiS, forming ThiS-thiocarboxylate. This is a step in the synthesis of thiazole, in the thiamine biosynthesis pathway. The sulfur is donated as persulfide by IscS. This chain is tRNA sulfurtransferase, found in Aliivibrio fischeri (strain ATCC 700601 / ES114) (Vibrio fischeri).